The primary structure comprises 197 residues: Holliday junction branch migration complex subunit RuvA (197 aa).

The domain I stretch occupies residues 1–64 (MIGRLSGKLI…EDAHLLYGFA (64 aa)). The segment at 65 to 143 (SKEERQTFRQ…TGGNLTVPGG (79 aa)) is domain II. Residues 143–147 (GLPFA) are flexible linker. Residues 148-197 (ATPDEKSDIVNALLALGYNEKEAAAATKSLPADVTVSEGVRLALKSLMKV) form a domain III region.

The protein belongs to the RuvA family. Homotetramer. Forms an RuvA(8)-RuvB(12)-Holliday junction (HJ) complex. HJ DNA is sandwiched between 2 RuvA tetramers; dsDNA enters through RuvA and exits via RuvB. An RuvB hexamer assembles on each DNA strand where it exits the tetramer. Each RuvB hexamer is contacted by two RuvA subunits (via domain III) on 2 adjacent RuvB subunits; this complex drives branch migration. In the full resolvosome a probable DNA-RuvA(4)-RuvB(12)-RuvC(2) complex forms which resolves the HJ.

It is found in the cytoplasm. The RuvA-RuvB-RuvC complex processes Holliday junction (HJ) DNA during genetic recombination and DNA repair, while the RuvA-RuvB complex plays an important role in the rescue of blocked DNA replication forks via replication fork reversal (RFR). RuvA specifically binds to HJ cruciform DNA, conferring on it an open structure. The RuvB hexamer acts as an ATP-dependent pump, pulling dsDNA into and through the RuvAB complex. HJ branch migration allows RuvC to scan DNA until it finds its consensus sequence, where it cleaves and resolves the cruciform DNA. The polypeptide is Holliday junction branch migration complex subunit RuvA (Chromobacterium violaceum (strain ATCC 12472 / DSM 30191 / JCM 1249 / CCUG 213 / NBRC 12614 / NCIMB 9131 / NCTC 9757 / MK)).